We begin with the raw amino-acid sequence, 31 residues long: Cyclotide psybry A (31 aa).

The cyclopeptide (Gly-Asn) cross-link spans 1-31 (GFNPCGETCIWFPTCHAPGCTCSIANICVRN). 3 disulfide bridges follow: C5-C20, C9-C22, and C15-C28.

In terms of processing, this is a cyclic peptide.

Its function is as follows. Probably participates in a plant defense mechanism. The protein is Cyclotide psybry A of Psychotria brachyceras.